Consider the following 396-residue polypeptide: Cell adhesion molecule 3 (396 aa).

An N-terminal signal peptide occupies residues 1–22 (MGAPSALPLLLLLACSWAPGGA). In terms of domain architecture, Ig-like V-type spans 23–124 (NLSQDDSQPW…VRTAKSLVTV (102 aa)). Over 23-328 (NLSQDDSQPW…PVPSSSSTYH (306 aa)) the chain is Extracellular. Intrachain disulfides connect Cys-48–Cys-108, Cys-150–Cys-207, and Cys-252–Cys-297. Ig-like C2-type domains lie at 128 to 226 (PQKP…QRIE) and 231 to 313 (PTAM…FTLN). Residue Asn-288 is glycosylated (N-linked (GlcNAc...) asparagine). A helical transmembrane segment spans residues 329-349 (AIIGGIVAFIVFLLLILLIFL). The Cytoplasmic portion of the chain corresponds to 350 to 396 (GHYLIRHKGTYLTHEAKGSDDAPDADTAIINAEGGQSGGDDKKEYFI). Positions 365-396 (AKGSDDAPDADTAIINAEGGQSGGDDKKEYFI) are disordered. Residue Ser-386 is modified to Phosphoserine.

This sequence belongs to the nectin family. As to quaternary structure, homodimer. Can form trans-heterodimers with NECTIN3. Interacts with EPB41L1, DLG3, PALS2 and CASK. In terms of tissue distribution, mainly expressed in brain, in neuronal cell bodies of cerebellum, cortex, hippocampus, hypothalamus and spinal cord. In spinal cord predominantly expressed in motor neurons. Expressed in axons, presynaptic nerve terminals, glia cell processes.

It is found in the cell membrane. The protein localises to the cell junction. Its function is as follows. Involved in cell-cell adhesion. Has both calcium-independent homophilic cell-cell adhesion activity and calcium-independent heterophilic cell-cell adhesion activity with IGSF4, NECTIN1 and NECTIN3. Interaction with EPB41L1 may regulate structure or function of cell-cell junctions. The polypeptide is Cell adhesion molecule 3 (Cadm3) (Mus musculus (Mouse)).